The primary structure comprises 216 residues: Putative F-box protein At2g03610 (216 aa).

The F-box domain occupies N19–N69.

This is Putative F-box protein At2g03610 from Arabidopsis thaliana (Mouse-ear cress).